Consider the following 234-residue polypeptide: Leucyl/phenylalanyl-tRNA--protein transferase (234 aa).

It belongs to the L/F-transferase family.

It localises to the cytoplasm. The catalysed reaction is N-terminal L-lysyl-[protein] + L-leucyl-tRNA(Leu) = N-terminal L-leucyl-L-lysyl-[protein] + tRNA(Leu) + H(+). The enzyme catalyses N-terminal L-arginyl-[protein] + L-leucyl-tRNA(Leu) = N-terminal L-leucyl-L-arginyl-[protein] + tRNA(Leu) + H(+). It carries out the reaction L-phenylalanyl-tRNA(Phe) + an N-terminal L-alpha-aminoacyl-[protein] = an N-terminal L-phenylalanyl-L-alpha-aminoacyl-[protein] + tRNA(Phe). Its function is as follows. Functions in the N-end rule pathway of protein degradation where it conjugates Leu, Phe and, less efficiently, Met from aminoacyl-tRNAs to the N-termini of proteins containing an N-terminal arginine or lysine. The protein is Leucyl/phenylalanyl-tRNA--protein transferase of Salmonella agona (strain SL483).